A 240-amino-acid polypeptide reads, in one-letter code: Manganese transport system ATP-binding protein MntB (240 aa).

Residues 1–233 enclose the ABC transporter domain; sequence MNIQGLTIAY…KIQFAYGDAP (233 aa). An ATP-binding site is contributed by 33–40; the sequence is GPNGAGKS.

The protein belongs to the ABC transporter superfamily.

The protein resides in the cell membrane. Functionally, this protein is probably a component of a manganese permease, a binding protein-dependent, ATP-driven transport system. Probably responsible for energy coupling to the transport system. The chain is Manganese transport system ATP-binding protein MntB (mntB) from Listeria innocua serovar 6a (strain ATCC BAA-680 / CLIP 11262).